Here is a 512-residue protein sequence, read N- to C-terminus: uncharacterized protein (512 aa).

Positions 1 to 22 are cleaved as a signal peptide; sequence MVSSLIYSLCAVSGLLATTVNG. Asn167 is a glycosylation site (N-linked (GlcNAc...) asparagine). The interval 251-282 is disordered; that stretch reads SAASPPIYEPDRQTDPEDPETGRNNNQGFEGL.

It localises to the secreted. This is an uncharacterized protein from Arthroderma benhamiae (strain ATCC MYA-4681 / CBS 112371) (Trichophyton mentagrophytes).